A 186-amino-acid chain; its full sequence is Ribosome-recycling factor (186 aa).

It belongs to the RRF family.

The protein resides in the cytoplasm. Its function is as follows. Responsible for the release of ribosomes from messenger RNA at the termination of protein biosynthesis. May increase the efficiency of translation by recycling ribosomes from one round of translation to another. The chain is Ribosome-recycling factor from Rickettsia bellii (strain OSU 85-389).